Reading from the N-terminus, the 196-residue chain is Large ribosomal subunit protein mL66 (196 aa).

The N-terminal 34 residues, 1–34, are a transit peptide targeting the mitochondrion; it reads MAALKALVSGCGRLLRGLLAGPAATSWSRLPARG.

It belongs to the bacterial ribosomal protein bS18 family. Mitochondrion-specific ribosomal protein mL66 subfamily. As to quaternary structure, component of the mitochondrial large ribosomal subunit (mt-LSU). Mature mammalian 55S mitochondrial ribosomes consist of a small (28S) and a large (39S) subunit. The 28S small subunit contains a 12S ribosomal RNA (12S mt-rRNA) and 30 different proteins. The 39S large subunit contains a 16S rRNA (16S mt-rRNA), a copy of mitochondrial valine transfer RNA (mt-tRNA(Val)), which plays an integral structural role, and 52 different proteins. mL66 forms a zinc-binding site with uL10m.

The protein localises to the mitochondrion. The chain is Large ribosomal subunit protein mL66 (MRPS18A) from Homo sapiens (Human).